The primary structure comprises 180 residues: MASEKSYKTVPVTGKNLAMIYHHMGNKTQSLEEAYKQLEKELGETQAPPPSPQSSLDGEPLSEGELEEISEEEEEEGEAPPPIPAKKRQRKNPSKAPAAKAPRNYGTPSYMLHVDLKHDIAGVLEEIRRASLKKPAHTPSIRNRTYPSITKRYLYERDSKKLQQYLDDSKKLLAKYSEGV.

The tract at residues 31–108 (LEEAYKQLEK…AKAPRNYGTP (78 aa)) is disordered. Residues 33 to 43 (EAYKQLEKELG) show a composition bias toward basic and acidic residues. A compositionally biased stretch (acidic residues) spans 60 to 78 (PLSEGELEEISEEEEEEGE).

This Pantherophis guttatus (Corn snake) protein is Putative protein 33K.